We begin with the raw amino-acid sequence, 296 residues long: NAD kinase (296 aa).

Catalysis depends on Asp-72, which acts as the Proton acceptor. Residues 72-73, 146-147, Arg-157, Lys-174, Asp-176, 187-192, and Gln-247 contribute to the NAD(+) site; these read DG, ND, and TAYALS.

Belongs to the NAD kinase family. A divalent metal cation serves as cofactor.

The protein localises to the cytoplasm. It catalyses the reaction NAD(+) + ATP = ADP + NADP(+) + H(+). Functionally, involved in the regulation of the intracellular balance of NAD and NADP, and is a key enzyme in the biosynthesis of NADP. Catalyzes specifically the phosphorylation on 2'-hydroxyl of the adenosine moiety of NAD to yield NADP. This chain is NAD kinase, found in Pseudomonas fluorescens (strain ATCC BAA-477 / NRRL B-23932 / Pf-5).